A 375-amino-acid polypeptide reads, in one-letter code: DNA replication and repair protein RecF (375 aa).

30–37 (GDNAQGKS) is a binding site for ATP.

It belongs to the RecF family.

Its subcellular location is the cytoplasm. Its function is as follows. The RecF protein is involved in DNA metabolism; it is required for DNA replication and normal SOS inducibility. RecF binds preferentially to single-stranded, linear DNA. It also seems to bind ATP. This Gloeobacter violaceus (strain ATCC 29082 / PCC 7421) protein is DNA replication and repair protein RecF.